Here is a 256-residue protein sequence, read N- to C-terminus: Fumarate reductase iron-sulfur subunit (256 aa).

A 2Fe-2S ferredoxin-type domain is found at 7–97 (MNVEVLRYNP…HMRIEPLANF (91 aa)). Tyr-14 is a binding site for a menaquinone. 4 residues coordinate [2Fe-2S] cluster: Cys-58, Cys-63, Cys-66, and Cys-78. The 4Fe-4S ferredoxin-type domain maps to 151 to 180 (LEKYRQFSMCINCGLCYAACPQFGLNPEFL). Residues Cys-160, Cys-163, and Cys-166 each contribute to the [4Fe-4S] cluster site. [3Fe-4S] cluster-binding residues include Cys-170, Cys-216, and Cys-222. Cys-226 contacts [4Fe-4S] cluster. 237-240 (NQGK) is an a menaquinone binding site.

The protein belongs to the succinate dehydrogenase/fumarate reductase iron-sulfur protein family. In terms of assembly, fumarate dehydrogenase forms part of an enzyme complex containing four subunits: a flavoprotein, an iron-sulfur, and two hydrophobic anchor proteins. The cofactor is [2Fe-2S] cluster. It depends on [3Fe-4S] cluster as a cofactor. [4Fe-4S] cluster serves as cofactor.

Its subcellular location is the cell inner membrane. It catalyses the reaction a quinone + succinate = fumarate + a quinol. The catalysed reaction is a menaquinone + succinate = a menaquinol + fumarate. The polypeptide is Fumarate reductase iron-sulfur subunit (frdB) (Haemophilus influenzae (strain ATCC 51907 / DSM 11121 / KW20 / Rd)).